The following is a 348-amino-acid chain: Holliday junction branch migration complex subunit RuvB (348 aa).

The large ATPase domain (RuvB-L) stretch occupies residues 4–184 (ADRLIAASGR…FGIVQRLEFY (181 aa)). ATP-binding positions include isoleucine 23, arginine 24, glycine 65, lysine 68, threonine 69, threonine 70, 131 to 133 (EDF), arginine 174, tyrosine 184, and arginine 221. Mg(2+) is bound at residue threonine 69. The interval 185 to 255 (SDKDLATIVS…VADLALNLLD (71 aa)) is small ATPAse domain (RuvB-S). The segment at 258–348 (ERGFDHSDRR…GADFSEAGDE (91 aa)) is head domain (RuvB-H). Residues arginine 294, arginine 313, and arginine 318 each contribute to the DNA site.

It belongs to the RuvB family. Homohexamer. Forms an RuvA(8)-RuvB(12)-Holliday junction (HJ) complex. HJ DNA is sandwiched between 2 RuvA tetramers; dsDNA enters through RuvA and exits via RuvB. An RuvB hexamer assembles on each DNA strand where it exits the tetramer. Each RuvB hexamer is contacted by two RuvA subunits (via domain III) on 2 adjacent RuvB subunits; this complex drives branch migration. In the full resolvosome a probable DNA-RuvA(4)-RuvB(12)-RuvC(2) complex forms which resolves the HJ.

Its subcellular location is the cytoplasm. It catalyses the reaction ATP + H2O = ADP + phosphate + H(+). The RuvA-RuvB-RuvC complex processes Holliday junction (HJ) DNA during genetic recombination and DNA repair, while the RuvA-RuvB complex plays an important role in the rescue of blocked DNA replication forks via replication fork reversal (RFR). RuvA specifically binds to HJ cruciform DNA, conferring on it an open structure. The RuvB hexamer acts as an ATP-dependent pump, pulling dsDNA into and through the RuvAB complex. RuvB forms 2 homohexamers on either side of HJ DNA bound by 1 or 2 RuvA tetramers; 4 subunits per hexamer contact DNA at a time. Coordinated motions by a converter formed by DNA-disengaged RuvB subunits stimulates ATP hydrolysis and nucleotide exchange. Immobilization of the converter enables RuvB to convert the ATP-contained energy into a lever motion, pulling 2 nucleotides of DNA out of the RuvA tetramer per ATP hydrolyzed, thus driving DNA branch migration. The RuvB motors rotate together with the DNA substrate, which together with the progressing nucleotide cycle form the mechanistic basis for DNA recombination by continuous HJ branch migration. Branch migration allows RuvC to scan DNA until it finds its consensus sequence, where it cleaves and resolves cruciform DNA. This chain is Holliday junction branch migration complex subunit RuvB, found in Pseudomonas putida (strain W619).